Here is a 407-residue protein sequence, read N- to C-terminus: Tyrosine--tRNA ligase (407 aa).

Position 35 (tyrosine 35) interacts with L-tyrosine. The 'HIGH' region signature appears at 40-49 (PTADSLHVGH). Positions 168 and 172 each coordinate L-tyrosine. The 'KMSKS' region motif lies at 228–232 (KMGKT). Lysine 231 is an ATP binding site. One can recognise an S4 RNA-binding domain in the interval 341–405 (NPLVDLLAKC…RGKKNFNRIV (65 aa)).

Belongs to the class-I aminoacyl-tRNA synthetase family. TyrS type 1 subfamily. As to quaternary structure, homodimer.

The protein localises to the cytoplasm. The enzyme catalyses tRNA(Tyr) + L-tyrosine + ATP = L-tyrosyl-tRNA(Tyr) + AMP + diphosphate + H(+). Catalyzes the attachment of tyrosine to tRNA(Tyr) in a two-step reaction: tyrosine is first activated by ATP to form Tyr-AMP and then transferred to the acceptor end of tRNA(Tyr). In Clostridium botulinum (strain 657 / Type Ba4), this protein is Tyrosine--tRNA ligase.